Here is a 649-residue protein sequence, read N- to C-terminus: Quinol oxidase subunit 1 (649 aa).

At 1–13 (MKFKWDEFFVTGD) the chain is on the extracellular side. The helical transmembrane segment at 14–34 (PLILGAQVSIALSTIAIIFVL) threads the bilayer. Residues 35 to 55 (TYFKKWKWLWSEWITTVDHKK) lie on the Cytoplasmic side of the membrane. A helical transmembrane segment spans residues 56–76 (LGIMYIISAVIMLFRGGVDGL). Topologically, residues 77–104 (MMRAQLALPNNSFLDSNHYNEIFTTHGT) are extracellular. A Fe(II)-heme a-binding site is contributed by His-102. Residues 105–125 (IMIIFMAMPFLIGLINVVVPL) form a helical membrane-spanning segment. Residues 126 to 139 (QIGARDVAFPYLNN) are Cytoplasmic-facing. A helical membrane pass occupies residues 140–160 (LSFWTFFVGAMLFNISFVIGG). The Extracellular segment spans residues 161 to 187 (SPNAGWTSYMPLASNDMSPGPGENYYL). Residues 188–208 (LGLQIAGIGTLMTGINFMVTI) form a helical membrane-spanning segment. The Cytoplasmic segment spans residues 209 to 228 (LKMRTKGMTLMRMPMFTWTT). The chain crosses the membrane as a helical span at residues 229–249 (LITMVIIVFAFPVLTVALALL). At 250–273 (SFDRLFGAHFFTLEAGGMPMLWAN) the chain is on the extracellular side. The helical transmembrane segment at 274 to 294 (LFWIWGHPEVYIVILPAFGIF) threads the bilayer. Cu cation contacts are provided by His-280 and Tyr-284. The 1'-histidyl-3'-tyrosine (His-Tyr) cross-link spans 280-284 (HPEVY). Residues 295 to 305 (SEIISSFARKQ) lie on the Cytoplasmic side of the membrane. The chain crosses the membrane as a helical span at residues 306–326 (LFGYTAMVGSIIAISVLSFLV). The Extracellular portion of the chain corresponds to 327–342 (WTHHFFTMGNSASVNS). 2 residues coordinate Cu cation: His-329 and His-330. A helical transmembrane segment spans residues 343–363 (FFSITTMAISIPTGVKIFNWL). Topologically, residues 364-376 (FTMYKGRISFTTP) are cytoplasmic. A helical membrane pass occupies residues 377-397 (MLWALAFIPNFVIGGVTGVML). Residues 398–415 (AMAAADYQYHNTYFLVSH) lie on the Extracellular side of the membrane. Heme a3 is bound at residue His-415. Residues 416–436 (FHYVLIAGTVFACFAGFIFWY) traverse the membrane as a helical segment. A Fe(II)-heme a-binding site is contributed by His-417. Over 437–451 (PKMFGHKLNERIGKW) the chain is Cytoplasmic. Residues 452-472 (FFWIFMIGFNICFFPQYFLGL) traverse the membrane as a helical segment. The Extracellular segment spans residues 473–492 (QGMPRRIYTYGPNDGWTTLN). A helical transmembrane segment spans residues 493–513 (FISTVGAFMMGVGFLILCYNI). At 514-585 (YYSFRYSTRE…KFKKIHMPSN (72 aa)) the chain is on the cytoplasmic side. A helical transmembrane segment spans residues 586–603 (SGRPFFMSVAFGIAGFGL). Residues 604–606 (VFE) are Extracellular-facing. A helical transmembrane segment spans residues 607 to 624 (WYWMGVVGLIGVLLCMVL). The Cytoplasmic portion of the chain corresponds to 625–649 (RSFEYDNGYYISVDEIKETERKISE).

It belongs to the heme-copper respiratory oxidase family. Requires Cu cation as cofactor. Ferriheme a serves as cofactor. It depends on Heme A3. as a cofactor.

It is found in the cell membrane. It catalyses the reaction 2 a quinol + O2 = 2 a quinone + 2 H2O. It participates in energy metabolism; oxidative phosphorylation. Its function is as follows. Catalyzes quinol oxidation with the concomitant reduction of oxygen to water. Major component for energy conversion during vegetative growth. This is Quinol oxidase subunit 1 (qoxB) from Bacillus spizizenii (strain ATCC 23059 / NRRL B-14472 / W23) (Bacillus subtilis subsp. spizizenii).